Here is a 93-residue protein sequence, read N- to C-terminus: Small ribosomal subunit protein uS19 (93 aa).

It belongs to the universal ribosomal protein uS19 family.

Protein S19 forms a complex with S13 that binds strongly to the 16S ribosomal RNA. This Limosilactobacillus fermentum (strain NBRC 3956 / LMG 18251) (Lactobacillus fermentum) protein is Small ribosomal subunit protein uS19.